The sequence spans 279 residues: CDP-paratose synthase (279 aa).

Catalysis depends on Tyr-115, which acts as the Proton acceptor.

This sequence belongs to the NAD(P)-dependent epimerase/dehydratase family.

The catalysed reaction is CDP-alpha-D-paratose + NADP(+) = CDP-4-dehydro-3,6-dideoxy-alpha-D-glucose + NADPH + H(+). It participates in nucleotide-sugar biosynthesis; CDP-3,6-dideoxy-D-mannose biosynthesis; CDP-3,6-dideoxy-D-mannose from CTP and alpha-D-glucose 1-phosphate: step 4/5. Catalyzes synthesis of paratose and tyvelose, unusual 3,6-dideoxyhexose sugars that form part of the O-antigen in the lipopolysaccharides of several enteric bacteria. This is CDP-paratose synthase (rfbS) from Salmonella typhi.